The sequence spans 156 residues: Transcription antitermination protein NusB (156 aa).

It belongs to the NusB family.

In terms of biological role, involved in transcription antitermination. Required for transcription of ribosomal RNA (rRNA) genes. Binds specifically to the boxA antiterminator sequence of the ribosomal RNA (rrn) operons. The polypeptide is Transcription antitermination protein NusB (Bartonella quintana (strain Toulouse) (Rochalimaea quintana)).